The sequence spans 253 residues: Negative modulator of initiation of replication (253 aa).

Residues 66-112 (SNQEQQTGHGHAGEPSAVQTPESNDYAKAQPHSSGYQPGQLEGHKSE) form a disordered region. The tract at residues 154 to 155 (AV) is interaction with DNA.

Belongs to the SeqA family. As to quaternary structure, homodimer. Polymerizes to form helical filaments.

The protein resides in the cytoplasm. In terms of biological role, negative regulator of replication initiation, which contributes to regulation of DNA replication and ensures that replication initiation occurs exactly once per chromosome per cell cycle. Binds to pairs of hemimethylated GATC sequences in the oriC region, thus preventing assembly of replication proteins and re-initiation at newly replicated origins. Repression is relieved when the region becomes fully methylated. This is Negative modulator of initiation of replication from Shewanella denitrificans (strain OS217 / ATCC BAA-1090 / DSM 15013).